The primary structure comprises 406 residues: RILP-like protein 1 (406 aa).

Ser-7 is subject to Phosphoserine. Residues 10 to 97 (AALSALEKNV…RVERMDRIEK (88 aa)) enclose the RH1 domain. Cys-47 carries the S-nitrosocysteine modification. Residues 76–258 (ELDELRLELD…KLRERLQGEH (183 aa)) adopt a coiled-coil conformation. Disordered regions lie at residues 255 to 280 (QGEH…ESIS) and 330 to 354 (EIEE…QPES). Ser-259 carries the post-translational modification Phosphoserine. Residues 262–280 (GEEEEAEIPPQPDGEESIS) are compositionally biased toward acidic residues. The 66-residue stretch at 294-359 (RPRFTLQELR…PQPESGIKRL (66 aa)) folds into the RH2 domain.

It belongs to the RILPL family. In terms of assembly, interacts (when S-nitrosylated) with GAPDH. Interacts with RAB8A; interaction is dependent on the phosphorylation of 'Thr-72' of RAB8A. Interacts with RAB10 and RAB12; the interaction is dependent on the phosphorylation of 'Thr-73' of RAB10, and 'Ser-105' of RAB12. Post-translationally, S-nitrosylation is required for the interaction with GAPDH. As to expression, highly expressed in heart, skeletal muscle, brain and lung (at protein level).

Its subcellular location is the cytoplasm. It is found in the cytosol. It localises to the cytoskeleton. The protein resides in the microtubule organizing center. The protein localises to the centrosome. Its subcellular location is the centriole. It is found in the cilium basal body. In terms of biological role, plays a role in the regulation of cell shape and polarity. Plays a role in cellular protein transport, including protein transport away from primary cilia. Neuroprotective protein, which acts by sequestring GAPDH in the cytosol and prevent the apoptotic function of GAPDH in the nucleus. Competes with SIAH1 for binding GAPDH. Does not regulate lysosomal morphology and distribution. Binds to RAB10 following LRRK2-mediated RAB10 phosphorylation which leads to inhibition of ciliogenesis. This is RILP-like protein 1 (Rilpl1) from Rattus norvegicus (Rat).